We begin with the raw amino-acid sequence, 128 residues long: Small ribosomal subunit protein uS11 (128 aa).

It belongs to the universal ribosomal protein uS11 family. In terms of assembly, part of the 30S ribosomal subunit. Interacts with proteins S7 and S18. Binds to IF-3.

Its function is as follows. Located on the platform of the 30S subunit, it bridges several disparate RNA helices of the 16S rRNA. Forms part of the Shine-Dalgarno cleft in the 70S ribosome. This Chloroherpeton thalassium (strain ATCC 35110 / GB-78) protein is Small ribosomal subunit protein uS11.